Consider the following 453-residue polypeptide: Homogentisate 1,2-dioxygenase (453 aa).

The active-site Proton acceptor is the histidine 306. The Fe cation site is built by histidine 349 and glutamate 355. The homogentisate site is built by tyrosine 364 and histidine 385. Histidine 385 lines the Fe cation pocket.

It belongs to the homogentisate dioxygenase family. In terms of assembly, hexamer; dimer of trimers. Fe cation serves as cofactor.

It carries out the reaction homogentisate + O2 = 4-maleylacetoacetate + H(+). Its pathway is amino-acid degradation; L-phenylalanine degradation; acetoacetate and fumarate from L-phenylalanine: step 4/6. Involved in the catabolism of homogentisate (2,5-dihydroxyphenylacetate or 2,5-OH-PhAc), a central intermediate in the degradation of phenylalanine and tyrosine. Catalyzes the oxidative ring cleavage of the aromatic ring of homogentisate to yield maleylacetoacetate. In Rhizobium rhizogenes (strain K84 / ATCC BAA-868) (Agrobacterium radiobacter), this protein is Homogentisate 1,2-dioxygenase.